The chain runs to 199 residues: Imidazole glycerol phosphate synthase subunit HisH (199 aa).

Positions 3–199 constitute a Glutamine amidotransferase type-1 domain; it reads NITIIDTGCA…LKNFVEKVPF (197 aa). Cys-78 acts as the Nucleophile in catalysis. Catalysis depends on residues His-178 and Glu-180.

As to quaternary structure, heterodimer of HisH and HisF.

It localises to the cytoplasm. It carries out the reaction 5-[(5-phospho-1-deoxy-D-ribulos-1-ylimino)methylamino]-1-(5-phospho-beta-D-ribosyl)imidazole-4-carboxamide + L-glutamine = D-erythro-1-(imidazol-4-yl)glycerol 3-phosphate + 5-amino-1-(5-phospho-beta-D-ribosyl)imidazole-4-carboxamide + L-glutamate + H(+). It catalyses the reaction L-glutamine + H2O = L-glutamate + NH4(+). It functions in the pathway amino-acid biosynthesis; L-histidine biosynthesis; L-histidine from 5-phospho-alpha-D-ribose 1-diphosphate: step 5/9. Its function is as follows. IGPS catalyzes the conversion of PRFAR and glutamine to IGP, AICAR and glutamate. The HisH subunit catalyzes the hydrolysis of glutamine to glutamate and ammonia as part of the synthesis of IGP and AICAR. The resulting ammonia molecule is channeled to the active site of HisF. In Haemophilus influenzae (strain 86-028NP), this protein is Imidazole glycerol phosphate synthase subunit HisH.